Consider the following 367-residue polypeptide: Polygalacturonase (367 aa).

The first 18 residues, 1 to 18, serve as a signal peptide directing secretion; it reads MRTSFVTMLALGAAAVSA. Cys-34 and Cys-49 are oxidised to a cystine. 5 PbH1 repeats span residues 161-191, 192-213, 214-234, 243-264, and 272-294; these read ADRL…DVGS, STFI…AINS, GSNI…SIGS, VKDV…RVKT, and VSGV…VIEQ. Asp-206 acts as the Proton donor in catalysis. Cysteines 208 and 224 form a disulfide. His-228 is a catalytic residue. N-linked (GlcNAc...) asparagine glycosylation is found at Asn-318 and Asn-336. Intrachain disulfides connect Cys-334/Cys-339 and Cys-358/Cys-367.

It belongs to the glycosyl hydrolase 28 family.

It is found in the secreted. It carries out the reaction (1,4-alpha-D-galacturonosyl)n+m + H2O = (1,4-alpha-D-galacturonosyl)n + (1,4-alpha-D-galacturonosyl)m.. The chain is Polygalacturonase (PG1) from Penicillium digitatum (Green mold).